Reading from the N-terminus, the 711-residue chain is Polyribonucleotide nucleotidyltransferase (711 aa).

2 residues coordinate Mg(2+): aspartate 486 and aspartate 492. The KH domain occupies 553–612 (PRIHTIKINPDKIKDVIGKGGSVIRALTEETGTTIEIEDDGTVKIAATDGEKAKHAIRRI). Residues 622-690 (GRVYTGKVTR…RQGRIRLSIK (69 aa)) form the S1 motif domain. The tract at residues 689 to 711 (IKEATEQSQPAAAPEAPAAEQGE) is disordered. Low complexity predominate over residues 694 to 711 (EQSQPAAAPEAPAAEQGE).

Belongs to the polyribonucleotide nucleotidyltransferase family. In terms of assembly, component of the RNA degradosome, which is a multiprotein complex involved in RNA processing and mRNA degradation. Requires Mg(2+) as cofactor.

The protein resides in the cytoplasm. It carries out the reaction RNA(n+1) + phosphate = RNA(n) + a ribonucleoside 5'-diphosphate. Involved in mRNA degradation. Catalyzes the phosphorolysis of single-stranded polyribonucleotides processively in the 3'- to 5'-direction. The polypeptide is Polyribonucleotide nucleotidyltransferase (Escherichia coli O8 (strain IAI1)).